The sequence spans 456 residues: Putative sodium-coupled neutral amino acid transporter 11 (456 aa).

Residues 1 to 25 form a disordered region; sequence MRAGPRRQHLLPPQDNRAAVGYQRQ. The chain crosses the membrane as a helical span at residues 58–78; that stretch reads FNVVNSIIGSGIIDFSLILLI. A glycan (N-linked (GlcNAc...) asparagine) is linked at Asn-94. A run of 6 helical transmembrane segments spans residues 98 to 118, 143 to 163, 171 to 191, 206 to 226, 252 to 272, and 291 to 313; these read GFPGYILLSVLQFLYPFIAMI, VFIGRHFIIGLSTVTFTLPLS, LGKVSLISTGLTTLILGIVMA, AWVFAKPNAIQAVGVMSFAFI, MSIVISVFICIFFATCGYLTF, and VTFGRFCYGVTVILTYPMECFVT. An N-linked (GlcNAc...) asparagine glycan is attached at Asn-325. 3 helical membrane-spanning segments follow: residues 329-349, 351-371, and 390-410; these read VFHIVVTVMVITVATLVSLLI, CLGIVLELNGVLCATPLIFII, and IMSYVMLPIGAAVMVFGFVMA.

This sequence belongs to the amino acid/polyamine transporter 2 family.

Its subcellular location is the membrane. Its function is as follows. Putative sodium-dependent amino acid/proton antiporter. The polypeptide is Putative sodium-coupled neutral amino acid transporter 11 (SLC38A11) (Macaca fascicularis (Crab-eating macaque)).